Consider the following 511-residue polypeptide: GMP synthase [glutamine-hydrolyzing] (511 aa).

A Glutamine amidotransferase type-1 domain is found at 5–195 (DILVLDFGSQ…AKYACNCESV (191 aa)). C82 (nucleophile) is an active-site residue. Residues H169 and E171 contribute to the active site. The GMPS ATP-PPase domain occupies 196–386 (WNMGSFAKTQ…LGLSKEVVYR (191 aa)). An ATP-binding site is contributed by 223–229 (SGGVDSS).

As to quaternary structure, homodimer.

It catalyses the reaction XMP + L-glutamine + ATP + H2O = GMP + L-glutamate + AMP + diphosphate + 2 H(+). Its pathway is purine metabolism; GMP biosynthesis; GMP from XMP (L-Gln route): step 1/1. Its function is as follows. Catalyzes the synthesis of GMP from XMP. The polypeptide is GMP synthase [glutamine-hydrolyzing] (Campylobacter jejuni (strain RM1221)).